The sequence spans 386 residues: Alanine racemase (386 aa).

Residue K48 is the Proton acceptor; specific for D-alanine of the active site. Position 48 is an N6-(pyridoxal phosphate)lysine (K48). R147 provides a ligand contact to substrate. The Proton acceptor; specific for L-alanine role is filled by Y279. Residue M327 coordinates substrate.

This sequence belongs to the alanine racemase family. The cofactor is pyridoxal 5'-phosphate.

The enzyme catalyses L-alanine = D-alanine. Its pathway is amino-acid biosynthesis; D-alanine biosynthesis; D-alanine from L-alanine: step 1/1. Catalyzes the interconversion of L-alanine and D-alanine. May also act on other amino acids. In Prochlorococcus marinus (strain SARG / CCMP1375 / SS120), this protein is Alanine racemase (alr).